A 788-amino-acid chain; its full sequence is Spastin (788 aa).

Positions 1 to 105 (MVRTKNQSSS…PRSAGGPSSV (105 aa)) are disordered. Topologically, residues 1–116 (MVRTKNQSSS…KQNLYVVSFP (116 aa)) are cytoplasmic. The interval 1 to 227 (MVRTKNQSSS…NRSGSGYSPG (227 aa)) is required for localization to punctate cytoplasmic foci. Low complexity-rich tracts occupy residues 8–48 (SSSS…SSHR) and 57–75 (ATNV…SSPD). Positions 117 to 137 (IIFLFNVLRSLIYQLFCIFRY) form an intramembrane region, helical. Residues 138–788 (LYGASTKVIY…WSSDYGDITI (651 aa)) are Cytoplasmic-facing. The tract at residues 227-788 (GPGDPLLAKQ…WSSDYGDITI (562 aa)) is sufficient for interaction with microtubules and microtubule severing. An MIT domain is found at 240-315 (HRRAFEYISK…SMARDRLHFL (76 aa)). A compositionally biased stretch (basic and acidic residues) spans 330–353 (KEEQKPNPSREQHQKPQKAREAAD). Residues 330–484 (KEEQKPNPSR…SGSGSGASTP (155 aa)) are disordered. Positions 380–400 (LTTPRISATATTPTSSSSLAS) are enriched in low complexity. Polar residues-rich tracts occupy residues 419–433 (NKSQ…SKTS) and 453–469 (QFSS…RTPI). The segment at 471–485 (NNGASGSGSGASTPV) is required for interaction with microtubules. 553 to 560 (GPPGNGKT) is a binding site for ATP.

This sequence belongs to the AAA ATPase family. Spastin subfamily. As to quaternary structure, homohexamer. The homohexamer is stabilized by ATP-binding. The homohexamer may adopt a ring conformation through which microtubules pass prior to being severed. Interacts with microtubules. Interacts with atl; may be involved in microtubule dynamics.

The protein resides in the membrane. It localises to the cytoplasm. Its subcellular location is the cytoskeleton. It is found in the microtubule organizing center. The protein localises to the centrosome. The protein resides in the chromosome. It localises to the lipid droplet. It carries out the reaction n ATP + n H2O + a microtubule = n ADP + n phosphate + (n+1) alpha/beta tubulin heterodimers.. Its function is as follows. ATP-dependent microtubule severing protein. Stimulates microtubule minus-end depolymerization and poleward microtubule flux in the mitotic spindle. Regulates microtubule stability in the neuromuscular junction synapse. Involved in lipid metabolism by regulating the size and distribution of lipid droplets. Involved in axon regeneration by regulating microtubule severing. This is Spastin from Drosophila pseudoobscura pseudoobscura (Fruit fly).